Here is a 209-residue protein sequence, read N- to C-terminus: Putative 3-methyladenine DNA glycosylase (209 aa).

The disordered stretch occupies residues 189–209 (HVSTTRLGAPKKKRQKRLERR). A compositionally biased stretch (basic residues) spans 197 to 209 (APKKKRQKRLERR).

The protein belongs to the DNA glycosylase MPG family.

This is Putative 3-methyladenine DNA glycosylase from Chlorobaculum parvum (strain DSM 263 / NCIMB 8327) (Chlorobium vibrioforme subsp. thiosulfatophilum).